The sequence spans 375 residues: Probable dipeptidase PepE (375 aa).

The next 2 helical transmembrane spans lie at 15-35 and 55-75; these read LALAAAATADAGLAGLVITPG and LVLPAAGAPAVVLPRLELAAL. Mn(2+) is bound by residues D230, D242, H306, E335, and E349.

It belongs to the peptidase M24B family. Mn(2+) serves as cofactor.

The protein resides in the cell membrane. The chain is Probable dipeptidase PepE (pepE) from Mycobacterium bovis (strain ATCC BAA-935 / AF2122/97).